A 413-amino-acid polypeptide reads, in one-letter code: Elongation factor 1-alpha (413 aa).

A tr-type G domain is found at Lys5–Val211. A G1 region spans residues Gly14–Ser21. Gly14–Ser21 provides a ligand contact to GTP. Ser21 lines the Mg(2+) pocket. The G2 stretch occupies residues Gly60–Asp64. Positions Asp81–Gly84 are G3. Residues Asp81–His85 and Asn136–Asp139 each bind GTP. The G4 stretch occupies residues Asn136–Asp139. A G5 region spans residues Ser175–Phe177.

This sequence belongs to the TRAFAC class translation factor GTPase superfamily. Classic translation factor GTPase family. EF-Tu/EF-1A subfamily.

The protein resides in the cytoplasm. It catalyses the reaction GTP + H2O = GDP + phosphate + H(+). Functionally, GTP hydrolase that promotes the GTP-dependent binding of aminoacyl-tRNA to the A-site of ribosomes during protein biosynthesis. This Methanobrevibacter smithii (strain ATCC 35061 / DSM 861 / OCM 144 / PS) protein is Elongation factor 1-alpha.